The primary structure comprises 761 residues: Zinc finger protein 287 (761 aa).

The SCAN box domain maps to 49-131; it reads RQNFRNFPYP…TLVEDLTQIL (83 aa). The tract at residues 134 to 154 is disordered; it reads EAPQNSTLSQDTPEEDPRGKH. One can recognise a KRAB domain in the interval 170–238; sequence MTFKDVAVDI…IKEILEGPSP (69 aa). C2H2-type zinc fingers lie at residues 368-390, 396-418, 424-446, 452-474, 480-502, 508-530, 536-558, 564-586, 592-614, 620-642, 648-670, 676-698, 704-726, and 732-754; these read YKCN…QSTH, YECE…QRMH, YECH…QRIH, YKCD…QRTH, YKCL…QRVH, YICN…QKIH, YKCN…QRIH, YKCN…QTTH, YICN…HRTH, YKCS…QRIH, FKCN…QRIH, YKCN…QRTH, and YACR…QRVH.

Belongs to the krueppel C2H2-type zinc-finger protein family.

The protein localises to the nucleus. In terms of biological role, may be involved in transcriptional regulation. The sequence is that of Zinc finger protein 287 from Pongo pygmaeus (Bornean orangutan).